The primary structure comprises 288 residues: 4-diphosphocytidyl-2-C-methyl-D-erythritol kinase (288 aa).

Lysine 8 is a catalytic residue. 90-100 contributes to the ATP binding site; it reads PVGAGLAGGSS. Residue aspartate 132 is part of the active site.

This sequence belongs to the GHMP kinase family. IspE subfamily.

The enzyme catalyses 4-CDP-2-C-methyl-D-erythritol + ATP = 4-CDP-2-C-methyl-D-erythritol 2-phosphate + ADP + H(+). It participates in isoprenoid biosynthesis; isopentenyl diphosphate biosynthesis via DXP pathway; isopentenyl diphosphate from 1-deoxy-D-xylulose 5-phosphate: step 3/6. Its function is as follows. Catalyzes the phosphorylation of the position 2 hydroxy group of 4-diphosphocytidyl-2C-methyl-D-erythritol. This Chlamydia trachomatis serovar L2b (strain UCH-1/proctitis) protein is 4-diphosphocytidyl-2-C-methyl-D-erythritol kinase.